Reading from the N-terminus, the 142-residue chain is Universal stress protein D (142 aa).

This sequence belongs to the universal stress protein A family.

It is found in the cytoplasm. Required for resistance to DNA-damaging agents. The sequence is that of Universal stress protein D (uspD) from Escherichia coli O157:H7.